The sequence spans 351 residues: Glycerol-3-phosphate dehydrogenase 1-like protein (351 aa).

12-17 (GSGNWG) provides a ligand contact to NAD(+). Position 122 (Lys-122) interacts with substrate. Residue Ala-155 participates in NAD(+) binding. Lys-206 acts as the Proton acceptor in catalysis. Positions 271, 298, and 300 each coordinate NAD(+). 271 to 272 (RN) contributes to the substrate binding site.

This sequence belongs to the NAD-dependent glycerol-3-phosphate dehydrogenase family. In terms of assembly, interacts with SCN5A.

It localises to the cytoplasm. The catalysed reaction is sn-glycerol 3-phosphate + NAD(+) = dihydroxyacetone phosphate + NADH + H(+). Its function is as follows. Plays a role in regulating cardiac sodium current; decreased enzymatic activity with resulting increased levels of glycerol 3-phosphate activating the DPD1L-dependent SCN5A phosphorylation pathway, may ultimately lead to decreased sodium current; cardiac sodium current may also be reduced due to alterations of NAD(H) balance induced by DPD1L. The sequence is that of Glycerol-3-phosphate dehydrogenase 1-like protein (Gpd1l) from Mus musculus (Mouse).